The following is a 399-amino-acid chain: Bombesin receptor subtype-3 (399 aa).

The Extracellular segment spans residues 1–41 (MSQRQPQSPNQTLISITNDTETSSSAVSNDTTPKGWTGDNS). Residues Asn-10, Asn-18, and Asn-29 are each glycosylated (N-linked (GlcNAc...) asparagine). A helical membrane pass occupies residues 42 to 63 (PGIEALCAIYITYAVIISVGIL). Residues 64 to 82 (GNAILIKVFFKTKSMQTVP) are Cytoplasmic-facing. The chain crosses the membrane as a helical span at residues 83 to 103 (NIFITSLAFGDLLLLLTCVPV). At 104–121 (DATHYLAEGWLFGKVGCK) the chain is on the extracellular side. Cys-120 and Cys-203 are disulfide-bonded. The chain crosses the membrane as a helical span at residues 122 to 143 (VLSFIRLTSVGVSVFTLTILSA). Over 144 to 163 (DRYKAVVKPLERQPSNAILK) the chain is Cytoplasmic. The chain crosses the membrane as a helical span at residues 164-184 (TCAKAGGIWIMAMIFALPEAI). The Extracellular segment spans residues 185 to 220 (FSNVYTFQDPNRNVTFESCNSYPISERLLQEIHSLL). Residues 221–241 (CFLVFYIIPLSIISVYYSLIA) form a helical membrane-spanning segment. The Cytoplasmic segment spans residues 242-272 (RTLYKSTLNIPTEEQSHARKQIESRKRIAKT). Residues 273–293 (VLVLVALFALCWLPNHLLYLY) form a helical membrane-spanning segment. The Extracellular segment spans residues 294-313 (HSFTYESYAEPSDVPFVVTI). Residues 314 to 333 (FSRVLAFSNSCVNPFALYWL) traverse the membrane as a helical segment. Residues 334–399 (SKTFQKHFKA…STAKKGEDKV (66 aa)) are Cytoplasmic-facing. Cys-347 carries S-palmitoyl cysteine lipidation.

It belongs to the G-protein coupled receptor 1 family. In terms of assembly, interacts with C6orf89.

The protein resides in the cell membrane. Functionally, role in sperm cell division, maturation, or function. This receptor mediates its action by association with G proteins that activate a phosphatidylinositol-calcium second messenger system. The sequence is that of Bombesin receptor subtype-3 (Brs3) from Rattus norvegicus (Rat).